Reading from the N-terminus, the 306-residue chain is Pantothenate kinase (306 aa).

Position 91–98 (91–98) interacts with ATP; that stretch reads GSVAVGKS.

The protein belongs to the prokaryotic pantothenate kinase family.

The protein localises to the cytoplasm. It catalyses the reaction (R)-pantothenate + ATP = (R)-4'-phosphopantothenate + ADP + H(+). It participates in cofactor biosynthesis; coenzyme A biosynthesis; CoA from (R)-pantothenate: step 1/5. This chain is Pantothenate kinase, found in Streptococcus pyogenes serotype M49 (strain NZ131).